The sequence spans 416 residues: Beta sliding clamp (416 aa).

It belongs to the beta sliding clamp family. As to quaternary structure, forms a ring-shaped head-to-tail homodimer around DNA which binds and tethers DNA polymerases and other proteins to the DNA. The DNA replisome complex has a single clamp-loading complex (3 tau and 1 each of delta, delta', psi and chi subunits) which binds 3 Pol III cores (1 core on the leading strand and 2 on the lagging strand) each with a beta sliding clamp dimer. Additional proteins in the replisome are other copies of gamma, psi and chi, Ssb, DNA helicase and RNA primase.

The protein localises to the cytoplasm. In terms of biological role, confers DNA tethering and processivity to DNA polymerases and other proteins. Acts as a clamp, forming a ring around DNA (a reaction catalyzed by the clamp-loading complex) which diffuses in an ATP-independent manner freely and bidirectionally along dsDNA. Initially characterized for its ability to contact the catalytic subunit of DNA polymerase III (Pol III), a complex, multichain enzyme responsible for most of the replicative synthesis in bacteria; Pol III exhibits 3'-5' exonuclease proofreading activity. The beta chain is required for initiation of replication as well as for processivity of DNA replication. This Chlamydia trachomatis serovar D (strain ATCC VR-885 / DSM 19411 / UW-3/Cx) protein is Beta sliding clamp (dnaN).